Here is a 282-residue protein sequence, read N- to C-terminus: Succinate dehydrogenase [ubiquinone] iron-sulfur subunit, mitochondrial (282 aa).

The transit peptide at 1 to 30 (MAAVVGVSLKRGFSATALGRVGLQFQACRE) directs the protein to the mitochondrion. An N6-acetyllysine mark is found at Lys-53 and Lys-57. The 80-residue stretch at 56-135 (DKPRMQTYKV…VSKIYPLPHM (80 aa)) folds into the 2Fe-2S ferredoxin-type domain. Cys-95, Cys-100, Cys-103, and Cys-115 together coordinate [2Fe-2S] cluster. The interval 148-220 (FYAQYKSIEP…PAVLMQAYRW (73 aa)) is interaction with SDHAF1. A 4Fe-4S ferredoxin-type domain is found at 178 to 208 (DREKLDGLYECILCACCSTSCPSYWWNGDKY). Residues Cys-188, Cys-191, and Cys-194 each coordinate [4Fe-4S] cluster. Cys-198 contributes to the [3Fe-4S] cluster binding site. An a ubiquinone-binding site is contributed by Trp-203. Cys-245 and Cys-251 together coordinate [3Fe-4S] cluster. Residue Cys-255 participates in [4Fe-4S] cluster binding.

Belongs to the succinate dehydrogenase/fumarate reductase iron-sulfur protein family. In terms of assembly, component of complex II composed of four subunits: the flavoprotein (FP) SDHA, iron-sulfur protein (IP) SDHB, and a cytochrome b560 composed of SDHC and SDHD. Interacts with SDHAF1; the interaction is required for iron-sulfur cluster incorporation into SDHB. Requires [2Fe-2S] cluster as cofactor. [3Fe-4S] cluster is required as a cofactor. The cofactor is [4Fe-4S] cluster.

The protein resides in the mitochondrion inner membrane. It carries out the reaction a quinone + succinate = fumarate + a quinol. The enzyme catalyses (R)-malate + a quinone = enol-oxaloacetate + a quinol. It catalyses the reaction (S)-malate + a quinone = enol-oxaloacetate + a quinol. The protein operates within carbohydrate metabolism; tricarboxylic acid cycle; fumarate from succinate (eukaryal route): step 1/1. Enol-oxaloacetate inhibits the succinate dehydrogenase activity. In terms of biological role, iron-sulfur protein (IP) subunit of the succinate dehydrogenase complex (mitochondrial respiratory chain complex II), responsible for transferring electrons from succinate to ubiquinone (coenzyme Q). SDH also oxidizes malate to the non-canonical enol form of oxaloacetate, enol-oxaloacetate. Enol-oxaloacetate, which is a potent inhibitor of the succinate dehydrogenase activity, is further isomerized into keto-oxaloacetate. The sequence is that of Succinate dehydrogenase [ubiquinone] iron-sulfur subunit, mitochondrial (Sdhb) from Rattus norvegicus (Rat).